The primary structure comprises 377 residues: Chaperone protein DnaJ (377 aa).

Residues 5-70 (DYYQVLGVAK…QKRAAYDQYG (66 aa)) form the J domain. A CR-type zinc finger spans residues 137–215 (GYDTQIRVPS…CHGAGKTKET (79 aa)). Residues cysteine 150, cysteine 153, cysteine 167, cysteine 170, cysteine 189, cysteine 192, cysteine 203, and cysteine 206 each coordinate Zn(2+). 4 CXXCXGXG motif repeats span residues 150–157 (CEICHGSG), 167–174 (CPTCNGSG), 189–196 (CPKCHGTG), and 203–210 (CTHCHGAG).

This sequence belongs to the DnaJ family. Homodimer. The cofactor is Zn(2+).

The protein resides in the cytoplasm. Participates actively in the response to hyperosmotic and heat shock by preventing the aggregation of stress-denatured proteins and by disaggregating proteins, also in an autonomous, DnaK-independent fashion. Unfolded proteins bind initially to DnaJ; upon interaction with the DnaJ-bound protein, DnaK hydrolyzes its bound ATP, resulting in the formation of a stable complex. GrpE releases ADP from DnaK; ATP binding to DnaK triggers the release of the substrate protein, thus completing the reaction cycle. Several rounds of ATP-dependent interactions between DnaJ, DnaK and GrpE are required for fully efficient folding. Also involved, together with DnaK and GrpE, in the DNA replication of plasmids through activation of initiation proteins. The protein is Chaperone protein DnaJ of Paraburkholderia phymatum (strain DSM 17167 / CIP 108236 / LMG 21445 / STM815) (Burkholderia phymatum).